We begin with the raw amino-acid sequence, 344 residues long: L-rhamnose-proton symporter (344 aa).

10 helical membrane passes run 4–24 (AITM…CFYA), 38–58 (WSVG…ALLL), 74–94 (LPVF…GLTM), 101–121 (MGIG…TPII), 137–157 (TLLG…AGQL), 175–195 (LVLA…MNAA), 214–234 (LPSY…FCFI), 259–279 (VLLS…YAWG), 290–310 (ISWM…GLVL), and 323–343 (VLSL…IGMA).

It belongs to the L-rhamnose transporter (TC 2.A.7.6) family.

Its subcellular location is the cell inner membrane. The enzyme catalyses L-rhamnopyranose(in) + H(+)(in) = L-rhamnopyranose(out) + H(+)(out). Its function is as follows. Uptake of L-rhamnose across the cytoplasmic membrane with the concomitant transport of protons into the cell (symport system). The polypeptide is L-rhamnose-proton symporter (Escherichia coli (strain K12 / MC4100 / BW2952)).